Here is a 439-residue protein sequence, read N- to C-terminus: 23S rRNA (uracil(1939)-C(5))-methyltransferase RlmD (439 aa).

The region spanning 10–68 is the TRAM domain; that stretch reads QKKLRAAFTTIVQDLDYQGLGVAKIQGKTWFIENALPQEQVQVQVIEEKRQYGLGRVQK. [4Fe-4S] cluster is bound by residues C81, C87, C90, and C168. Residues Q271, F300, N305, E321, D348, and D369 each contribute to the S-adenosyl-L-methionine site. C395 serves as the catalytic Nucleophile.

The protein belongs to the class I-like SAM-binding methyltransferase superfamily. RNA M5U methyltransferase family. RlmD subfamily.

The enzyme catalyses uridine(1939) in 23S rRNA + S-adenosyl-L-methionine = 5-methyluridine(1939) in 23S rRNA + S-adenosyl-L-homocysteine + H(+). Catalyzes the formation of 5-methyl-uridine at position 1939 (m5U1939) in 23S rRNA. The chain is 23S rRNA (uracil(1939)-C(5))-methyltransferase RlmD from Histophilus somni (strain 129Pt) (Haemophilus somnus).